Consider the following 622-residue polypeptide: Phosphomethylpyrimidine synthase (622 aa).

Residues 109 to 130 are disordered; that stretch reads EPISNNNNDRQSSDKQLSFTTN. Residues asparagine 234, methionine 263, tyrosine 292, histidine 328, 348–350, 389–392, and glutamate 428 contribute to the substrate site; these read SRG and DGLR. A Zn(2+)-binding site is contributed by histidine 432. Residue tyrosine 455 participates in substrate binding. Position 496 (histidine 496) interacts with Zn(2+). Residues cysteine 576, cysteine 579, and cysteine 584 each coordinate [4Fe-4S] cluster.

The protein belongs to the ThiC family. In terms of assembly, homodimer. Requires [4Fe-4S] cluster as cofactor.

The enzyme catalyses 5-amino-1-(5-phospho-beta-D-ribosyl)imidazole + S-adenosyl-L-methionine = 4-amino-2-methyl-5-(phosphooxymethyl)pyrimidine + CO + 5'-deoxyadenosine + formate + L-methionine + 3 H(+). The protein operates within cofactor biosynthesis; thiamine diphosphate biosynthesis. Catalyzes the synthesis of the hydroxymethylpyrimidine phosphate (HMP-P) moiety of thiamine from aminoimidazole ribotide (AIR) in a radical S-adenosyl-L-methionine (SAM)-dependent reaction. The protein is Phosphomethylpyrimidine synthase of Baumannia cicadellinicola subsp. Homalodisca coagulata.